An 858-amino-acid chain; its full sequence is MDLPAVLAAPATRGDQHGGGPSRLRRGAGPSLGAGPGRRRLLLLRGPEDGGPGPRPEEAPGPSPPPPEDGGDSFVVLLEVPRAADTHGQEEAEPDSGASPTEQVPAAAPGAALAGTVTIHNQDLLVRFDRGVFTLAAAPAPAAPSLHPATTPGLEPSSAAASRRGPVAASAGSPAYRCPEPQCALSFAKKHQLKVHLLTHGSLQGRRPFKCPLDGCGWAFTTSYKLKRHLQSHDKLRPFSCPVGGCGKKFTTVYNLKAHMKGHEQESLFKCEVCAERFPTHAKLNSHQRSHFEPERPYKCDFPGCEKTFITVSALFSHNRAHFREQELFSCSFPGCNKQYDKACRLKIHLRSHTGERPFICDSDSCGWTFTSMSKLLRHKRKHDDDRRFTCPVEGCGKSFTRAEHLKGHSITHLGTKPFECPVEGCCARFSARSSLYIHSKKHLQDVGTPKSRCPVSSCNRLFTSKHSMKAHVVRQHSRRQDLVPQLEAPSSLTPSSELSSPGQSELTNIDLAALFSDTPANSSSSTAGSDEALNSGILTIDVTSVSSSLGGNLPTNNNSLGPMDPLVLVAHGDMPPSLDSPLVLGTSATVLQPGSFSADDSQAMSTGAVGCLVALPVRNLNQDSPALTPSNNLTAPGTTPTSSDTTQETGSVPDLLVPIKVEQDLSPVPDVVQGQKESHGPSQSVLSSSTERPGAQKDSELSAGTGSLYLESGGSARTDYRAIQLVKKKKQKGTGSDEGASDSAHRKVKGGTINPPHVHSGQHSCFCGTLMVPSGGLTVPAPAAGLQCVQIPVLQDDPSGEGGLPLGLSPQRSAFHPYFTVDLPVYVLQEVLPAPGGFAGLETAQVPGSTINLRDLE.

Disordered stretches follow at residues 1–73 (MDLP…GGDS), 85–108 (DTHGQEEAEPDSGASPTEQVPAAA), and 142–175 (AAPSLHPATTPGLEPSSAAASRRGPVAASAGSPA). Positions 59–68 (APGPSPPPPE) are enriched in pro residues. Over residues 142–152 (AAPSLHPATTP) the composition is skewed to low complexity. 10 consecutive C2H2-type zinc fingers follow at residues 176-200 (YRCPEPQCALSFAKKHQLKVHLLTH), 209-233 (FKCPLDGCGWAFTTSYKLKRHLQSH), 239-263 (FSCPVGGCGKKFTTVYNLKAHMKGH), 269-291 (FKCEVCAERFPTHAKLNSHQRSH), 298-322 (YKCDFPGCEKTFITVSALFSHNRAH), 329-353 (FSCSFPGCNKQYDKACRLKIHLRSH), 359-383 (FICDSDSCGWTFTSMSKLLRHKRKH), 389-413 (FTCPVEGCGKSFTRAEHLKGHSITH), 419-443 (FECPVEGCCARFSARSSLYIHSKKH), and 452-477 (SRCPVSSCNRLFTSKHSMKAHVVRQH). Polar residues predominate over residues 624-634 (DSPALTPSNNL). Residues 624–652 (DSPALTPSNNLTAPGTTPTSSDTTQETGS) are disordered. Positions 635-651 (TAPGTTPTSSDTTQETG) are enriched in low complexity. A Glycyl lysine isopeptide (Lys-Gly) (interchain with G-Cter in SUMO) cross-link involves residue K661. Disordered stretches follow at residues 671 to 714 (DVVQ…LESG) and 727 to 751 (VKKKKQKGTGSDEGASDSAHRKVKG). A compositionally biased stretch (polar residues) spans 681-692 (GPSQSVLSSSTE).

This sequence belongs to the ZXD family. As to quaternary structure, self-associates. Interacts with ZXDB and CIITA. In terms of processing, sumoylated at Lys-661 with SUMO1, SUMO2 and SUMO3; sumoylation enhances the activity of the transcriptional activation domain.

Its subcellular location is the nucleus. Functionally, cooperates with CIITA to promote transcription of MHC class I and MHC class II genes. The protein is Zinc finger protein ZXDC (Zxdc) of Mus musculus (Mouse).